Here is a 92-residue protein sequence, read N- to C-terminus: Cell division topological specificity factor (92 aa).

Belongs to the MinE family.

Its function is as follows. Prevents the cell division inhibition by proteins MinC and MinD at internal division sites while permitting inhibition at polar sites. This ensures cell division at the proper site by restricting the formation of a division septum at the midpoint of the long axis of the cell. This is Cell division topological specificity factor from Colwellia psychrerythraea (strain 34H / ATCC BAA-681) (Vibrio psychroerythus).